The following is a 186-amino-acid chain: Elongation factor P (186 aa).

It belongs to the elongation factor P family.

Its subcellular location is the cytoplasm. The protein operates within protein biosynthesis; polypeptide chain elongation. Its function is as follows. Involved in peptide bond synthesis. Stimulates efficient translation and peptide-bond synthesis on native or reconstituted 70S ribosomes in vitro. Probably functions indirectly by altering the affinity of the ribosome for aminoacyl-tRNA, thus increasing their reactivity as acceptors for peptidyl transferase. This Shewanella sp. (strain W3-18-1) protein is Elongation factor P.